Consider the following 224-residue polypeptide: Peroxiredoxin-6 (224 aa).

In terms of domain architecture, Thioredoxin spans 5-169; sequence LLLGDVAPNF…ILRVVISLQL (165 aa). A required and sufficient for targeting to lysosomes and lamellar bodies region spans residues 31 to 40; that stretch reads DSWGILFSHP. Thr-44 is modified (phosphothreonine). Residue Cys-47 is the Cysteine sulfenic acid (-SOH) intermediate; for peroxidase activity of the active site. Lys-63 is modified (N6-acetyllysine). Tyr-89 bears the Phosphotyrosine mark. Asp-140 serves as the catalytic For phospholipase activity. Residue Thr-177 is modified to Phosphothreonine; by MAPK. Lys-209 is subject to N6-acetyllysine; alternate. An N6-succinyllysine; alternate modification is found at Lys-209.

Belongs to the peroxiredoxin family. Prx6 subfamily. In terms of assembly, homodimer. Interacts with GSTP1; mediates PRDX6 glutathionylation and regeneration. Interacts with APEX1. Interacts with STH. May interact with FAM168B. May interact with HTR2A. Irreversibly inactivated by overoxidation of Cys-47 to sulfinic acid (Cys-SO(2)H) and sulfonic acid (Cys-SO(3)H) forms upon oxidative stress. In terms of processing, phosphorylation at Thr-177 by MAP kinases increases the phospholipase activity of the enzyme. The phosphorylated form exhibits a greater lysophosphatidylcholine acyltransferase activity compared to the non-phosphorylated form.

Its subcellular location is the cytoplasm. It is found in the lysosome. The enzyme catalyses a hydroperoxide + 2 glutathione = an alcohol + glutathione disulfide + H2O. It carries out the reaction a 1,2-diacyl-sn-glycero-3-phosphocholine + H2O = a 1-acyl-sn-glycero-3-phosphocholine + a fatty acid + H(+). The catalysed reaction is a 1-acyl-sn-glycero-3-phosphocholine + an acyl-CoA = a 1,2-diacyl-sn-glycero-3-phosphocholine + CoA. It catalyses the reaction 1-hexadecanoyl-sn-glycero-3-phosphocholine + hexadecanoyl-CoA = 1,2-dihexadecanoyl-sn-glycero-3-phosphocholine + CoA. The enzyme catalyses 1,2-dihexadecanoyl-sn-glycero-3-phosphocholine + H2O = 1-hexadecanoyl-sn-glycero-3-phosphocholine + hexadecanoate + H(+). With respect to regulation, MJ33 or lithium;[(2R)-1-hexadecoxy-3-(2,2,2-trifluoroethoxy)propan-2-yl] methyl phosphate inhibits its phospholipase A2 activity. CI-976 or 2,2-Dimethyl-N-(2,4,6-trimethoxyphenyl)dodecanamide inhibits its lysophosphatidylcholine acyltransferase activity. In terms of biological role, thiol-specific peroxidase that catalyzes the reduction of hydrogen peroxide and organic hydroperoxides to water and alcohols, respectively. Can reduce H(2)O(2) and short chain organic, fatty acid, and phospholipid hydroperoxides. Also has phospholipase activity, can therefore either reduce the oxidized sn-2 fatty acyl group of phospholipids (peroxidase activity) or hydrolyze the sn-2 ester bond of phospholipids (phospholipase activity). These activities are dependent on binding to phospholipids at acidic pH and to oxidized phospholipds at cytosolic pH. Plays a role in cell protection against oxidative stress by detoxifying peroxides and in phospholipid homeostasis. Exhibits acyl-CoA-dependent lysophospholipid acyltransferase which mediates the conversion of lysophosphatidylcholine (1-acyl-sn-glycero-3-phosphocholine or LPC) into phosphatidylcholine (1,2-diacyl-sn-glycero-3-phosphocholine or PC). Shows a clear preference for LPC as the lysophospholipid and for palmitoyl CoA as the fatty acyl substrate. The protein is Peroxiredoxin-6 (PRDX6) of Homo sapiens (Human).